We begin with the raw amino-acid sequence, 416 residues long: Iron-regulated transcriptional activator AFT2 (416 aa).

Asp53 serves as a coordination point for Zn(2+). The DNA site is built by Arg54, His55, Lys58, Ile74, Glu75, Arg76, Ser77, Asp78, and Lys81. His55 is a Zn(2+) binding site. Residue Cys86 participates in Zn(2+) binding. DNA is bound at residue Ser88. Cys109 is a Zn(2+) binding site. Positions 119 and 120 each coordinate DNA. The Zn(2+) site is built by His133 and His135. The DNA site is built by Gln157 and Asn159. Positions 187–189 (CDC) match the CDC [2Fe-2S] cluster binding motif motif.

In terms of assembly, homodimer. Dimerization decreases the DNA-binding activity.

It localises to the nucleus. With respect to regulation, dimerization via the binding of Fe(2+) or a [2Fe-2S] cluster decreases the DNA-binding activity. In terms of biological role, transcription factor required for iron homeostasis and resistance to oxidative stress. With AFT1, activates the gene expression in response to low-iron conditions, also called iron regulon. Recognizes the consensus iron-responsive element (Fe-RE) sequence 5'-CACCC-3' in the promoters of target genes. The transcription activation by AFT1 and AFT2 depends on the mitochondrial iron-sulfur protein biosynthesis pathway. In high iron condition, the presence of iron leads to dimerization, which in turn leads to a decrease in DNA affinity. The sequence is that of Iron-regulated transcriptional activator AFT2 from Saccharomyces cerevisiae (strain ATCC 204508 / S288c) (Baker's yeast).